The chain runs to 160 residues: 3-dehydroquinate dehydratase (160 aa).

The Proton acceptor role is filled by Y22. The substrate site is built by N73, H79, and D86. H99 functions as the Proton donor in the catalytic mechanism. Substrate is bound by residues I100 to S101 and R110.

The protein belongs to the type-II 3-dehydroquinase family. As to quaternary structure, homododecamer.

It carries out the reaction 3-dehydroquinate = 3-dehydroshikimate + H2O. It functions in the pathway metabolic intermediate biosynthesis; chorismate biosynthesis; chorismate from D-erythrose 4-phosphate and phosphoenolpyruvate: step 3/7. Catalyzes a trans-dehydration via an enolate intermediate. The polypeptide is 3-dehydroquinate dehydratase (Sulfurimonas denitrificans (strain ATCC 33889 / DSM 1251) (Thiomicrospira denitrificans (strain ATCC 33889 / DSM 1251))).